The chain runs to 544 residues: Secreted aspartic protease 9 (544 aa).

The signal sequence occupies residues 1–17; the sequence is MRLNSVALLSLVATALA. The tract at residues 31–50 is disordered; the sequence is GESKDDLSPEDDSNPRFVKR. In terms of domain architecture, Peptidase A1 spans 65–479; that stretch reads YMATLKIGSN…DLDDYEVSLA (415 aa). 83 to 85 is a binding site for pepstatin A; the sequence is DTG. A disulfide bridge connects residues cysteine 98 and cysteine 195. Threonine 167 is an active-site residue. Residues asparagine 212, asparagine 240, and asparagine 252 are each glycosylated (N-linked (GlcNAc...) asparagine). The active site involves aspartate 371. Position 371–375 (371–375) interacts with pepstatin A; that stretch reads DTGST. An intrachain disulfide couples cysteine 406 to cysteine 441. Residues asparagine 422 and asparagine 499 are each glycosylated (N-linked (GlcNAc...) asparagine). The segment at 500 to 520 is disordered; sequence SSGSGTTSSSGTSTSTSTRHS.

The protein belongs to the peptidase A1 family. Monomer. The GPI-anchor is attached to the protein in the endoplasmic reticulum and serves to target the protein to the cell surface. There, the glucosamine-inositol phospholipid moiety is cleaved off and the GPI-modified mannoprotein is covalently attached via its lipidless GPI glycan remnant to the 1,6-beta-glucan of the outer cell wall layer.

It localises to the cell membrane. It is found in the secreted. The protein resides in the cell wall. The enzyme catalyses Preferential cleavage at the carboxyl of hydrophobic amino acids, but fails to cleave 15-Leu-|-Tyr-16, 16-Tyr-|-Leu-17 and 24-Phe-|-Phe-25 of insulin B chain. Activates trypsinogen, and degrades keratin.. Its function is as follows. Secreted aspartic peptidases (SAPs) are a group of ten acidic hydrolases considered as key virulence factors. These enzymes supply the fungus with nutrient amino acids as well as are able to degrade the selected host's proteins involved in the immune defense. Moreover, acts toward human hemoglobin though limited proteolysis to generate a variety of antimicrobial hemocidins, enabling to compete with the other microorganisms of the same physiological niche using the microbicidal peptides generated from the host protein. Plays a key role in defense against host by cleaving histatin-5 (Hst 5), a peptide from human saliva that carries out fungicidal activity. The cleavage rate decreases in an order of SAP2 &gt; SAP9 &gt; SAP3 &gt; SAP7 &gt; SAP4 &gt; SAP1 &gt; SAP8. The first cleavage occurs between residues 'Lys-17' and 'His-18' of Hst 5, giving DSHAKRHHGYKRKFHEK and HHSHRGY peptides. Simultaneously, the DSHAKRHHGYKRK peptide is also formed. Further fragmentation by SAP9 results in FHEK product. In Candida albicans (Yeast), this protein is Secreted aspartic protease 9.